Here is a 182-residue protein sequence, read N- to C-terminus: Small ribosomal subunit protein uS9 (182 aa).

It belongs to the universal ribosomal protein uS9 family.

This Corynebacterium efficiens (strain DSM 44549 / YS-314 / AJ 12310 / JCM 11189 / NBRC 100395) protein is Small ribosomal subunit protein uS9.